The sequence spans 892 residues: Alpha-actinin-1 (892 aa).

An N-acetylmethionine modification is found at Met1. The segment at 1 to 247 (MDHYDSQQTN…IMTYVSSFYH (247 aa)) is actin-binding. Ser6 is modified (phosphoserine). Tyr12 carries the phosphotyrosine; by FAK1 modification. 2 consecutive Calponin-homology (CH) domains span residues 31-135 (KQQR…LRFA) and 144-250 (TSAK…HAFS). Residues Lys95 and Lys195 each carry the N6-acetyllysine modification. Spectrin repeat units follow at residues 274 to 384 (QLME…WLLN), 394 to 499 (HLAE…ALER), 509 to 620 (QLYL…ALTE), and 630 to 733 (RLRK…EVEN). An interaction with DDN region spans residues 274–733 (QLMEDYEKLA…IARTINEVEN (460 aa)). At Ser471 the chain carries Phosphoserine. Lys676 is subject to N6-acetyllysine. Ser677 carries the phosphoserine modification. EF-hand domains lie at 746–781 (EQMNEFRASFNHFDRDHSGTLGPEEFKACLISLGYD) and 787–822 (QGEAEFARIMSIVDPNRLGVVTFQAFIDFMSRETAD). Residues Asp759, Asp761, Ser763, Thr765, and Glu770 each contribute to the Ca(2+) site. At Ser890 the chain carries Phosphoserine.

It belongs to the alpha-actinin family. As to quaternary structure, homodimer; antiparallel. Interacts with MYOZ2, TTID and LPP. Interacts with DDN. Interacts with PSD. Interacts with MICALL2. Interacts with DNM2 and CTTN. Interacts with PDLIM1. Interacts with PDLIM2. Interacts with PDLIM4 (via PDZ domain). Interacts with IGSF8.

It localises to the cytoplasm. The protein localises to the cytoskeleton. It is found in the myofibril. The protein resides in the sarcomere. Its subcellular location is the z line. It localises to the cell membrane. The protein localises to the cell junction. It is found in the cell projection. The protein resides in the ruffle. Its function is as follows. F-actin cross-linking protein which is thought to anchor actin to a variety of intracellular structures. Association with IGSF8 regulates the immune synapse formation and is required for efficient T-cell activation. This is Alpha-actinin-1 (ACTN1) from Homo sapiens (Human).